A 980-amino-acid polypeptide reads, in one-letter code: Putative leucine-rich repeat receptor-like serine/threonine-protein kinase At2g24130 (980 aa).

Positions Met-1–Ala-20 are cleaved as a signal peptide. Residues Ser-21–Ser-593 are Extracellular-facing. N-linked (GlcNAc...) asparagine glycans are attached at residues Asn-55 and Asn-88. LRR repeat units lie at residues Ser-65 to Leu-89, Thr-90 to Leu-113, Glu-115 to Leu-138, Asn-139 to Asn-162, Ser-165 to His-189, Lys-191 to Ser-214, Thr-215 to Lys-238, and Pro-240 to Pro-263. N-linked (GlcNAc...) asparagine glycosylation is found at Asn-152, Asn-162, Asn-175, and Asn-213. Residues Asn-257 and Asn-270 are each glycosylated (N-linked (GlcNAc...) asparagine). 12 LRR repeats span residues Ser-271–Leu-295, Ser-296–Leu-320, Asn-322–Leu-344, Ser-345–Arg-370, Gly-372–Asn-391, Leu-392–Cys-416, Ile-417–Asn-440, Arg-442–Leu-463, Ser-464–Cys-490, Ile-491–Leu-514, Pro-515–Gln-537, and Ser-539–Lys-563. Asn-322 and Asn-327 each carry an N-linked (GlcNAc...) asparagine glycan. Asn-380 and Asn-391 each carry an N-linked (GlcNAc...) asparagine glycan. Residues Asn-428 and Asn-449 are each glycosylated (N-linked (GlcNAc...) asparagine). Asn-497 carries N-linked (GlcNAc...) asparagine glycosylation. Asn-545 and Asn-554 each carry an N-linked (GlcNAc...) asparagine glycan. The chain crosses the membrane as a helical span at residues Val-594–Pro-614. At Leu-615–Ser-980 the chain is on the cytoplasmic side. At Thr-658 the chain carries Phosphothreonine. Residues Phe-661 to Leu-960 enclose the Protein kinase domain. ATP-binding positions include Ile-667–Val-675 and Lys-689. Phosphotyrosine is present on Tyr-775. Asp-788 (proton acceptor) is an active-site residue. The residue at position 841 (Tyr-841) is a Phosphotyrosine.

This sequence belongs to the protein kinase superfamily. Ser/Thr protein kinase family.

It is found in the cell membrane. It catalyses the reaction L-seryl-[protein] + ATP = O-phospho-L-seryl-[protein] + ADP + H(+). It carries out the reaction L-threonyl-[protein] + ATP = O-phospho-L-threonyl-[protein] + ADP + H(+). The chain is Putative leucine-rich repeat receptor-like serine/threonine-protein kinase At2g24130 from Arabidopsis thaliana (Mouse-ear cress).